Here is a 214-residue protein sequence, read N- to C-terminus: tRNA (guanine-N(7)-)-methyltransferase (214 aa).

S-adenosyl-L-methionine is bound by residues E44, E69, D96, and D118. Residue D118 is part of the active site. Residues K122, D154, and T191–E194 contribute to the substrate site.

This sequence belongs to the class I-like SAM-binding methyltransferase superfamily. TrmB family.

It carries out the reaction guanosine(46) in tRNA + S-adenosyl-L-methionine = N(7)-methylguanosine(46) in tRNA + S-adenosyl-L-homocysteine. It functions in the pathway tRNA modification; N(7)-methylguanine-tRNA biosynthesis. Functionally, catalyzes the formation of N(7)-methylguanine at position 46 (m7G46) in tRNA. The chain is tRNA (guanine-N(7)-)-methyltransferase from Listeria monocytogenes serotype 4b (strain F2365).